Consider the following 76-residue polypeptide: Adipogenesis regulatory factor (76 aa).

Expressed in adipose tissue (at protein level). Highly expressed in omental and subcutaneous adipose tissues. Expressed in heart, cornea, liver, kidney and spleen.

Its subcellular location is the nucleus. Plays a role in fat cell development; promotes adipogenic differentiation and stimulates transcription initiation of master adipogenesis factors like PPARG and CEBPA at early stages of preadipocyte differentiation. Its overexpression confers resistance to the anticancer chemotherapeutic drug cisplatin. The polypeptide is Adipogenesis regulatory factor (ADIRF) (Homo sapiens (Human)).